Consider the following 590-residue polypeptide: Arginine--tRNA ligase (590 aa).

Residues 134 to 144 carry the 'HIGH' region motif; sequence ANPTGPMHVGH.

It belongs to the class-I aminoacyl-tRNA synthetase family. In terms of assembly, monomer.

The protein localises to the cytoplasm. The enzyme catalyses tRNA(Arg) + L-arginine + ATP = L-arginyl-tRNA(Arg) + AMP + diphosphate. The chain is Arginine--tRNA ligase from Beijerinckia indica subsp. indica (strain ATCC 9039 / DSM 1715 / NCIMB 8712).